The primary structure comprises 339 residues: S-adenosylmethionine:tRNA ribosyltransferase-isomerase (339 aa).

The protein belongs to the QueA family. Monomer.

The protein localises to the cytoplasm. The catalysed reaction is 7-aminomethyl-7-carbaguanosine(34) in tRNA + S-adenosyl-L-methionine = epoxyqueuosine(34) in tRNA + adenine + L-methionine + 2 H(+). It functions in the pathway tRNA modification; tRNA-queuosine biosynthesis. Functionally, transfers and isomerizes the ribose moiety from AdoMet to the 7-aminomethyl group of 7-deazaguanine (preQ1-tRNA) to give epoxyqueuosine (oQ-tRNA). The protein is S-adenosylmethionine:tRNA ribosyltransferase-isomerase of Campylobacter fetus subsp. fetus (strain 82-40).